The following is a 478-amino-acid chain: D(1B) dopamine receptor (478 aa).

The Extracellular segment spans residues 1-38 (MLPPGRNGTAHRARLGLQRQLAQVDAPGGSAAPLGPAQ). N7 carries an N-linked (GlcNAc...) asparagine glycan. Residues 39-64 (VVTAGLLTLLIVWTLLGNVLVCAAIV) form a helical membrane-spanning segment. Over 65-75 (RSRHLRAKMTN) the chain is Cytoplasmic. The helical transmembrane segment at 76 to 102 (IFIVSLAVSDLFVALLVMPWKAVAEVA) threads the bilayer. The Extracellular portion of the chain corresponds to 103–111 (GYWPFGAFC). An intrachain disulfide couples C111 to C211. A helical membrane pass occupies residues 112 to 134 (DIWVAFDIMCSTASILNLCIISV). Residues 135 to 153 (DRYWAISRPFRYERKMTQR) lie on the Cytoplasmic side of the membrane. Residues 154-179 (VALVMVALAWTLSILISFIPVQLNWH) form a helical membrane-spanning segment. The Extracellular segment spans residues 180 to 215 (RDKAGSQGREGLLSNETPWEEGWELDGRTENCDSSL). The chain crosses the membrane as a helical span at residues 216-240 (NRTYAISSSLISFYIPVAIMIVTYT). At 241-289 (RIYRIAQVQIRRISSLERAAEHAQSCRSRGACEPDPSLRASIKKETKVF) the chain is on the cytoplasmic side. Residues 290–317 (KTLSVIMGVFVCCWLPFFILNCMVPFCS) form a helical membrane-spanning segment. Residues 318-335 (SGDAQGPRTGFPCVSETT) are Extracellular-facing. Residues 336-357 (FDIFVWFGWANSSLNPIIYAFN) form a helical membrane-spanning segment. Over 358 to 478 (ADFRKVFAQL…LTPNCFHKTA (121 aa)) the chain is Cytoplasmic. The S-palmitoyl cysteine moiety is linked to residue C370. A disordered region spans residues 416–446 (GDREVGEEEEAEEEGPFDHMSQISPTTPDGD). Positions 420-430 (VGEEEEAEEEG) are enriched in acidic residues.

This sequence belongs to the G-protein coupled receptor 1 family.

The protein resides in the cell membrane. Functionally, dopamine receptor whose activity is mediated by G proteins which activate adenylyl cyclase. This Mus musculus (Mouse) protein is D(1B) dopamine receptor (Drd5).